The primary structure comprises 818 residues: Catenin beta (818 aa).

2 stretches are compositionally biased toward polar residues: residues methionine 1–glycine 21 and glycine 48–serine 66. Disordered stretches follow at residues methionine 1–methionine 24 and glycine 48–aspartate 71. ARM repeat units lie at residues asparagine 164–lysine 203, arginine 248–leucine 287, aspartate 412–cysteine 451, glutamine 454–serine 495, glutamate 501–leucine 541, proline 543–alanine 582, and lysine 648–glutamate 687. The interval glutamine 732 to leucine 818 is disordered.

Belongs to the beta-catenin family.

It is found in the cytoplasm. It localises to the cytoskeleton. Functionally, binds to the cytoplasmic domain of the cell-cell adhesion molecule E-cadherin, and perhaps to other (membrane) proteins. The association of catenins to cadherins produces a complex which is linked to the actin filament network, and which seems to be of primary importance for cadherins cell-adhesion properties. The chain is Catenin beta from Urechis caupo (Innkeeper worm).